The primary structure comprises 153 residues: Ribosome maturation factor RimP (153 aa).

This sequence belongs to the RimP family.

The protein resides in the cytoplasm. Functionally, required for maturation of 30S ribosomal subunits. The polypeptide is Ribosome maturation factor RimP (Acidithiobacillus ferrooxidans (strain ATCC 53993 / BNL-5-31) (Leptospirillum ferrooxidans (ATCC 53993))).